The primary structure comprises 420 residues: Napsin-A (420 aa).

The signal sequence occupies residues 1 to 25; sequence MSPPPLLQPLLLLLPLLNVEPSGAT. Positions 26-63 are cleaved as a propeptide — activation peptide; the sequence is LIRIPLHRVQPGRRILNLLRGWREPAELPKLGAPSPGD. The 322-residue stretch at 78–399 folds into the Peptidase A1 domain; that stretch reads YFGEIGLGTP…MKSSARVGLA (322 aa). A glycan (N-linked (GlcNAc...) asparagine) is linked at Asn90. The active site involves Asp96. Cysteines 109 and 116 form a disulfide. Residue Asn133 is glycosylated (N-linked (GlcNAc...) asparagine). Cys274 and Cys278 are joined by a disulfide. Asp283 is a catalytic residue. Cys317 and Cys354 are disulfide-bonded. Asn336 is a glycosylation site (N-linked (GlcNAc...) asparagine).

Belongs to the peptidase A1 family. Expressed predominantly in adult lung (type II pneumocytes) and kidney and in fetal lung. Low levels in adult spleen and very low levels in peripheral blood leukocytes.

The protein resides in the secreted. May be involved in processing of pneumocyte surfactant precursors. The polypeptide is Napsin-A (NAPSA) (Homo sapiens (Human)).